A 116-amino-acid polypeptide reads, in one-letter code: MDKKTSRLRRAIRARKKIQELGVNRLVVHRTPRHIYAQVINPEAQVVAAASTVEKAVKEQLKSTGNVDAAKAVGKFIAERAIEKGVTTVAFDRSGFKYHGRVAALADAAREAGLQF.

It belongs to the universal ribosomal protein uL18 family. As to quaternary structure, part of the 50S ribosomal subunit; part of the 5S rRNA/L5/L18/L25 subcomplex. Contacts the 5S and 23S rRNAs.

Functionally, this is one of the proteins that bind and probably mediate the attachment of the 5S RNA into the large ribosomal subunit, where it forms part of the central protuberance. The sequence is that of Large ribosomal subunit protein uL18 from Shewanella sp. (strain ANA-3).